Reading from the N-terminus, the 276-residue chain is Plant cysteine oxidase 2 (276 aa).

The interval Met1–Lys40 is disordered. Polar residues predominate over residues Lys17 to Arg28. Residues Asn30 to Lys40 are compositionally biased toward basic residues. Fe cation-binding residues include His134, His136, and His197.

This sequence belongs to the cysteine dioxygenase family. It depends on Fe(2+) as a cofactor.

It is found in the nucleus. Its subcellular location is the cytoplasm. The catalysed reaction is L-cysteine + O2 = 3-sulfino-L-alanine + H(+). Functionally, catalyzes the oxidation of N-terminal cysteine residues (N-Cys), thus preparing the protein for N-end rule pathway-mediated proteasomal degradation, upstream of the N-end rule enzymes ATE1, ATE2 and PRT6. Controls the preparation of the group VII ethylene response factor (ERF-VII) proteins for degradation via the 26S proteasome N-end rule pathway. Acts as an oxygen sensor that controls the stability of ERF-VII proteins, which are stabilized in flooding-induced hypoxia, and regulate transcriptional adaptation to these adverse conditions. Not active on Cys located inside or at the C-terminus of a peptide. Acts redundantly with PCO1 to repress the anaerobic response. The sequence is that of Plant cysteine oxidase 2 from Arabidopsis thaliana (Mouse-ear cress).